Reading from the N-terminus, the 455-residue chain is Bifunctional protein GlmU (455 aa).

Residues 1 to 229 (MYNCAILLAA…FEETMGVNSR (229 aa)) form a pyrophosphorylase region. UDP-N-acetyl-alpha-D-glucosamine is bound by residues 8 to 11 (LAAG), lysine 22, glutamine 73, and 78 to 79 (GT). Mg(2+) is bound at residue aspartate 103. Glycine 140, glutamate 155, asparagine 170, and asparagine 227 together coordinate UDP-N-acetyl-alpha-D-glucosamine. Asparagine 227 is a binding site for Mg(2+). Positions 230–250 (LQLAEVEAIMRKRINAMHLEN) are linker. Residues 251–455 (GVTIIDPNNT…EDWVKKKDEK (205 aa)) are N-acetyltransferase. Positions 332 and 350 each coordinate UDP-N-acetyl-alpha-D-glucosamine. Histidine 362 (proton acceptor) is an active-site residue. Residues tyrosine 365 and asparagine 376 each contribute to the UDP-N-acetyl-alpha-D-glucosamine site. Acetyl-CoA contacts are provided by residues 385–386 (NY), alanine 422, and arginine 439.

In the N-terminal section; belongs to the N-acetylglucosamine-1-phosphate uridyltransferase family. The protein in the C-terminal section; belongs to the transferase hexapeptide repeat family. As to quaternary structure, homotrimer. The cofactor is Mg(2+).

It localises to the cytoplasm. The catalysed reaction is alpha-D-glucosamine 1-phosphate + acetyl-CoA = N-acetyl-alpha-D-glucosamine 1-phosphate + CoA + H(+). It catalyses the reaction N-acetyl-alpha-D-glucosamine 1-phosphate + UTP + H(+) = UDP-N-acetyl-alpha-D-glucosamine + diphosphate. The protein operates within nucleotide-sugar biosynthesis; UDP-N-acetyl-alpha-D-glucosamine biosynthesis; N-acetyl-alpha-D-glucosamine 1-phosphate from alpha-D-glucosamine 6-phosphate (route II): step 2/2. Its pathway is nucleotide-sugar biosynthesis; UDP-N-acetyl-alpha-D-glucosamine biosynthesis; UDP-N-acetyl-alpha-D-glucosamine from N-acetyl-alpha-D-glucosamine 1-phosphate: step 1/1. It participates in bacterial outer membrane biogenesis; LPS lipid A biosynthesis. Functionally, catalyzes the last two sequential reactions in the de novo biosynthetic pathway for UDP-N-acetylglucosamine (UDP-GlcNAc). The C-terminal domain catalyzes the transfer of acetyl group from acetyl coenzyme A to glucosamine-1-phosphate (GlcN-1-P) to produce N-acetylglucosamine-1-phosphate (GlcNAc-1-P), which is converted into UDP-GlcNAc by the transfer of uridine 5-monophosphate (from uridine 5-triphosphate), a reaction catalyzed by the N-terminal domain. In Clostridium tetani (strain Massachusetts / E88), this protein is Bifunctional protein GlmU.